Reading from the N-terminus, the 190-residue chain is Holliday junction branch migration complex subunit RuvA (190 aa).

Residues 1-64 (MIGRISGQLA…EDAQILYGFG (64 aa)) form a domain I region. The segment at 65–137 (SATERAAFRQ…LKGKLGADIG (73 aa)) is domain II. Positions 137–141 (GVQVS) are flexible linker. The interval 142 to 190 (VSSDSQSDILQALVALGYSDRDAALALKALPKDIGVSDGIKLALKALAK) is domain III.

It belongs to the RuvA family. Homotetramer. Forms an RuvA(8)-RuvB(12)-Holliday junction (HJ) complex. HJ DNA is sandwiched between 2 RuvA tetramers; dsDNA enters through RuvA and exits via RuvB. An RuvB hexamer assembles on each DNA strand where it exits the tetramer. Each RuvB hexamer is contacted by two RuvA subunits (via domain III) on 2 adjacent RuvB subunits; this complex drives branch migration. In the full resolvosome a probable DNA-RuvA(4)-RuvB(12)-RuvC(2) complex forms which resolves the HJ.

The protein localises to the cytoplasm. In terms of biological role, the RuvA-RuvB-RuvC complex processes Holliday junction (HJ) DNA during genetic recombination and DNA repair, while the RuvA-RuvB complex plays an important role in the rescue of blocked DNA replication forks via replication fork reversal (RFR). RuvA specifically binds to HJ cruciform DNA, conferring on it an open structure. The RuvB hexamer acts as an ATP-dependent pump, pulling dsDNA into and through the RuvAB complex. HJ branch migration allows RuvC to scan DNA until it finds its consensus sequence, where it cleaves and resolves the cruciform DNA. The protein is Holliday junction branch migration complex subunit RuvA of Polaromonas sp. (strain JS666 / ATCC BAA-500).